Consider the following 605-residue polypeptide: Meiosis-specific protein HOP1 (605 aa).

Positions 20–250 (EQSQKLLQTM…TKHHKVALSV (231 aa)) constitute an HORMA domain. A zinc finger lies at 348–364 (CKSCRKTLHGICYGNFL).

It is found in the nucleus. The protein resides in the chromosome. Functionally, probable constituent of the synaptonemal complex during meiosis. May interact with RED1. The protein is Meiosis-specific protein HOP1 (HOP1) of Saccharomyces cerevisiae (strain ATCC 204508 / S288c) (Baker's yeast).